We begin with the raw amino-acid sequence, 223 residues long: MATPAVKVYGWAISPFVSRALLALEEAGVDYELVPMSRQDGDHRRPEHLARNPFGKVPVLEDGDLTLFESRAIARHVLRKHKPELLGGGRLEQTAMVDVWLEVEAHQLSPPAIAIVVECVFAPFLGRERNQAVVDENVEKLKKVLEVYEARLATCTYLAGDFLSLADLSPFTIMHCLMATEYAALVHALPHVSAWWQGLAARPAANKVAQFMPVGAGAPKEQE.

A2 carries the post-translational modification Blocked amino end (Ala). Positions 4–85 constitute a GST N-terminal domain; the sequence is PAVKVYGWAI…HVLRKHKPEL (82 aa). Glutathione contacts are provided by residues S14, 43 to 44, 56 to 57, and 69 to 70; these read HR, KV, and ES. Residues 90 to 223 form the GST C-terminal domain; that stretch reads RLEQTAMVDV…VGAGAPKEQE (134 aa).

Belongs to the GST superfamily. Phi family. In terms of assembly, homodimer or heterodimer of GST-I and GST-IV (=GST-II). In terms of tissue distribution, seedling roots.

It catalyses the reaction RX + glutathione = an S-substituted glutathione + a halide anion + H(+). Conjugation of reduced glutathione to a wide number of exogenous and endogenous hydrophobic electrophiles. Involved in the detoxification of certain herbicides. Most active with substrates possessing a chloroacetamide structure. Trans-cinnamic acid and 1-chloro-2,4-dinitrobenzene are not effective substrates. May play an important role in the benoxacor-mediated protection of maize from metolachlor injury. The sequence is that of Glutathione S-transferase 4 (GST4) from Zea mays (Maize).